The primary structure comprises 192 residues: dTTP/UTP pyrophosphatase (192 aa).

Residue Asp71 is the Proton acceptor of the active site.

It belongs to the Maf family. YhdE subfamily. The cofactor is a divalent metal cation.

The protein resides in the cytoplasm. The enzyme catalyses dTTP + H2O = dTMP + diphosphate + H(+). It carries out the reaction UTP + H2O = UMP + diphosphate + H(+). Nucleoside triphosphate pyrophosphatase that hydrolyzes dTTP and UTP. May have a dual role in cell division arrest and in preventing the incorporation of modified nucleotides into cellular nucleic acids. The sequence is that of dTTP/UTP pyrophosphatase from Clostridium tetani (strain Massachusetts / E88).